A 201-amino-acid polypeptide reads, in one-letter code: Recombination protein RecR (201 aa).

The segment at 57–72 adopts a C4-type zinc-finger fold; the sequence is CADCRTFTEQDICTIC. The Toprim domain occupies 81-176; it reads GQICVVESPA…VASRIAHGVP (96 aa).

Belongs to the RecR family.

Its function is as follows. May play a role in DNA repair. It seems to be involved in an RecBC-independent recombinational process of DNA repair. It may act with RecF and RecO. This Serratia proteamaculans (strain 568) protein is Recombination protein RecR.